The following is a 200-amino-acid chain: Superoxide dismutase [Fe] (200 aa).

Histidine 28, histidine 80, aspartate 162, and histidine 166 together coordinate Fe cation.

Belongs to the iron/manganese superoxide dismutase family. As to quaternary structure, homodimer. Requires Fe cation as cofactor.

It catalyses the reaction 2 superoxide + 2 H(+) = H2O2 + O2. Destroys superoxide anion radicals which are normally produced within the cells and which are toxic to biological systems. The polypeptide is Superoxide dismutase [Fe] (sodB) (Nostoc sp. (strain PCC 7120 / SAG 25.82 / UTEX 2576)).